A 474-amino-acid chain; its full sequence is tRNA-2-methylthio-N(6)-dimethylallyladenosine synthase (474 aa).

Positions 3-120 (KKLHIKTWGC…LPEMIEQVRR (118 aa)) constitute an MTTase N-terminal domain. [4Fe-4S] cluster-binding residues include Cys-12, Cys-49, Cys-83, Cys-157, Cys-161, and Cys-164. The region spanning 143–375 (RAEGPTAFVS…QDRITQQAMR (233 aa)) is the Radical SAM core domain. The TRAM domain maps to 378-441 (RHMMGTVQRI…TNSLRGKFIR (64 aa)).

Belongs to the methylthiotransferase family. MiaB subfamily. In terms of assembly, monomer. Requires [4Fe-4S] cluster as cofactor.

The protein localises to the cytoplasm. The catalysed reaction is N(6)-dimethylallyladenosine(37) in tRNA + (sulfur carrier)-SH + AH2 + 2 S-adenosyl-L-methionine = 2-methylsulfanyl-N(6)-dimethylallyladenosine(37) in tRNA + (sulfur carrier)-H + 5'-deoxyadenosine + L-methionine + A + S-adenosyl-L-homocysteine + 2 H(+). In terms of biological role, catalyzes the methylthiolation of N6-(dimethylallyl)adenosine (i(6)A), leading to the formation of 2-methylthio-N6-(dimethylallyl)adenosine (ms(2)i(6)A) at position 37 in tRNAs that read codons beginning with uridine. In Shewanella oneidensis (strain ATCC 700550 / JCM 31522 / CIP 106686 / LMG 19005 / NCIMB 14063 / MR-1), this protein is tRNA-2-methylthio-N(6)-dimethylallyladenosine synthase.